A 186-amino-acid chain; its full sequence is TATA box-binding protein-like 1 (186 aa).

It belongs to the TBP family.

It localises to the cytoplasm. Its subcellular location is the nucleus. Part of a specialized transcription system that mediates the transcription of most ribosomal proteins through the 5'-TCT-3' motif which is a core promoter element at these genes. Seems to also mediate the transcription of NF1. Does not bind the TATA box. Members of the TBP family are differentially required to regulate transcription and development during early embryogenesis. The chain is TATA box-binding protein-like 1 from Danio rerio (Zebrafish).